We begin with the raw amino-acid sequence, 547 residues long: Glucose-6-phosphate isomerase (547 aa).

E352 acts as the Proton donor in catalysis. Residues H383 and K511 contribute to the active site.

It belongs to the GPI family.

The protein localises to the cytoplasm. The enzyme catalyses alpha-D-glucose 6-phosphate = beta-D-fructose 6-phosphate. It functions in the pathway carbohydrate biosynthesis; gluconeogenesis. It participates in carbohydrate degradation; glycolysis; D-glyceraldehyde 3-phosphate and glycerone phosphate from D-glucose: step 2/4. Its function is as follows. Catalyzes the reversible isomerization of glucose-6-phosphate to fructose-6-phosphate. The protein is Glucose-6-phosphate isomerase of Rhodospirillum rubrum (strain ATCC 11170 / ATH 1.1.1 / DSM 467 / LMG 4362 / NCIMB 8255 / S1).